Consider the following 469-residue polypeptide: Probable ribonuclease FAU-1 (469 aa).

The protein belongs to the FAU-1 family.

Probable RNase involved in rRNA stability through maturation and/or degradation of precursor rRNAs. Binds to RNA in loop regions with AU-rich sequences. The sequence is that of Probable ribonuclease FAU-1 from Pyrococcus abyssi (strain GE5 / Orsay).